The following is a 310-amino-acid chain: Quinolinate synthase (310 aa).

His27 and Ser44 together coordinate iminosuccinate. A [4Fe-4S] cluster-binding site is contributed by Cys89. Iminosuccinate is bound by residues 115 to 117 (YVN) and Ser132. Cys175 serves as a coordination point for [4Fe-4S] cluster. Residues 201-203 (HPE) and Thr222 contribute to the iminosuccinate site. A [4Fe-4S] cluster-binding site is contributed by Cys267.

This sequence belongs to the quinolinate synthase family. Type 2 subfamily. The cofactor is [4Fe-4S] cluster.

It is found in the cytoplasm. It catalyses the reaction iminosuccinate + dihydroxyacetone phosphate = quinolinate + phosphate + 2 H2O + H(+). It functions in the pathway cofactor biosynthesis; NAD(+) biosynthesis; quinolinate from iminoaspartate: step 1/1. Functionally, catalyzes the condensation of iminoaspartate with dihydroxyacetone phosphate to form quinolinate. This is Quinolinate synthase from Thermus thermophilus (strain ATCC 27634 / DSM 579 / HB8).